The primary structure comprises 501 residues: ATP synthase subunit alpha, chloroplastic (501 aa).

ATP is bound at residue 170–177 (GDRQTGKT).

It belongs to the ATPase alpha/beta chains family. As to quaternary structure, F-type ATPases have 2 components, CF(1) - the catalytic core - and CF(0) - the membrane proton channel. CF(1) has five subunits: alpha(3), beta(3), gamma(1), delta(1), epsilon(1). CF(0) has four main subunits: a, b, b' and c.

It localises to the plastid. It is found in the chloroplast thylakoid membrane. It carries out the reaction ATP + H2O + 4 H(+)(in) = ADP + phosphate + 5 H(+)(out). Its function is as follows. Produces ATP from ADP in the presence of a proton gradient across the membrane. The alpha chain is a regulatory subunit. This is ATP synthase subunit alpha, chloroplastic from Nephroselmis olivacea (Green alga).